Reading from the N-terminus, the 373-residue chain is tRNA-specific 2-thiouridylase MnmA (373 aa).

ATP is bound by residues 12 to 19 (GMSGGVDS) and methionine 38. The tract at residues 98-100 (NPD) is interaction with target base in tRNA. The active-site Nucleophile is cysteine 103. A disulfide bridge connects residues cysteine 103 and cysteine 200. Glycine 127 contributes to the ATP binding site. Positions 150 to 152 (KDQ) are interaction with tRNA. The active-site Cysteine persulfide intermediate is cysteine 200. The tract at residues 312–313 (RY) is interaction with tRNA.

This sequence belongs to the MnmA/TRMU family.

It localises to the cytoplasm. It catalyses the reaction S-sulfanyl-L-cysteinyl-[protein] + uridine(34) in tRNA + AH2 + ATP = 2-thiouridine(34) in tRNA + L-cysteinyl-[protein] + A + AMP + diphosphate + H(+). In terms of biological role, catalyzes the 2-thiolation of uridine at the wobble position (U34) of tRNA, leading to the formation of s(2)U34. This Streptococcus pyogenes serotype M3 (strain SSI-1) protein is tRNA-specific 2-thiouridylase MnmA.